Consider the following 300-residue polypeptide: 4-hydroxy-tetrahydrodipicolinate synthase (300 aa).

A pyruvate-binding site is contributed by Thr55. Tyr143 serves as the catalytic Proton donor/acceptor. Lys171 functions as the Schiff-base intermediate with substrate in the catalytic mechanism. A pyruvate-binding site is contributed by Ile211.

The protein belongs to the DapA family. Homotetramer; dimer of dimers.

The protein localises to the cytoplasm. The enzyme catalyses L-aspartate 4-semialdehyde + pyruvate = (2S,4S)-4-hydroxy-2,3,4,5-tetrahydrodipicolinate + H2O + H(+). Its pathway is amino-acid biosynthesis; L-lysine biosynthesis via DAP pathway; (S)-tetrahydrodipicolinate from L-aspartate: step 3/4. Functionally, catalyzes the condensation of (S)-aspartate-beta-semialdehyde [(S)-ASA] and pyruvate to 4-hydroxy-tetrahydrodipicolinate (HTPA). The chain is 4-hydroxy-tetrahydrodipicolinate synthase from Mycobacterium leprae (strain Br4923).